Reading from the N-terminus, the 619-residue chain is Chitinase C (619 aa).

The N-terminal stretch at 1–30 (MRFRHKAAALAATLALPLAGLVGLASPAQA) is a signal peptide. Positions 31–134 (ATSATATFAK…KLNGGSCDGT (104 aa)) constitute a CBM2 domain. Residues 144–229 (APGTPTASNI…GAVKVTTTGG (86 aa)) enclose the Fibronectin type-III domain. A disordered region spans residues 212–236 (ADQTGPASGAVKVTTTGGGDGGNPG). Gly residues predominate over residues 227–236 (TGGGDGGNPG). Residues 240–619 (EVKMGYFTNW…TPAVRTTRRH (380 aa)) enclose the GH18 domain. Chitin contacts are provided by residues 312–313 (DQ) and 339–342 (GGWT). Glu-382 serves as the catalytic Proton donor. Residues Tyr-383, 449-452 (MTYD), and Trp-589 each bind chitin.

This sequence belongs to the glycosyl hydrolase 18 family. Chitinase class II subfamily.

The enzyme catalyses Random endo-hydrolysis of N-acetyl-beta-D-glucosaminide (1-&gt;4)-beta-linkages in chitin and chitodextrins.. The sequence is that of Chitinase C (chiC) from Streptomyces lividans.